The sequence spans 534 residues: CTP synthase (534 aa).

Positions 1–265 (MKYIVVTGGV…TTQLMKHLRL (265 aa)) are amidoligase domain. Residue Ser12 participates in CTP binding. Ser12 contributes to the UTP binding site. Residue 13–18 (GLGKGI) participates in ATP binding. Tyr53 serves as a coordination point for L-glutamine. Asp70 is an ATP binding site. The Mg(2+) site is built by Asp70 and Glu140. Residues 147-149 (DIE), 186-191 (KTKPTQ), and Lys222 contribute to the CTP site. UTP contacts are provided by residues 186 to 191 (KTKPTQ) and Lys222. Positions 289 to 530 (KLAIVGKYTN…VRAMCKYRKE (242 aa)) constitute a Glutamine amidotransferase type-1 domain. Gly352 provides a ligand contact to L-glutamine. The active-site Nucleophile; for glutamine hydrolysis is Cys379. L-glutamine-binding positions include 380–383 (LGMQ), Glu403, and Arg460. Residues His503 and Glu505 contribute to the active site.

This sequence belongs to the CTP synthase family. Homotetramer.

It carries out the reaction UTP + L-glutamine + ATP + H2O = CTP + L-glutamate + ADP + phosphate + 2 H(+). The catalysed reaction is L-glutamine + H2O = L-glutamate + NH4(+). It catalyses the reaction UTP + NH4(+) + ATP = CTP + ADP + phosphate + 2 H(+). It functions in the pathway pyrimidine metabolism; CTP biosynthesis via de novo pathway; CTP from UDP: step 2/2. With respect to regulation, allosterically activated by GTP, when glutamine is the substrate; GTP has no effect on the reaction when ammonia is the substrate. The allosteric effector GTP functions by stabilizing the protein conformation that binds the tetrahedral intermediate(s) formed during glutamine hydrolysis. Inhibited by the product CTP, via allosteric rather than competitive inhibition. Catalyzes the ATP-dependent amination of UTP to CTP with either L-glutamine or ammonia as the source of nitrogen. Regulates intracellular CTP levels through interactions with the four ribonucleotide triphosphates. The chain is CTP synthase from Methanosarcina mazei (strain ATCC BAA-159 / DSM 3647 / Goe1 / Go1 / JCM 11833 / OCM 88) (Methanosarcina frisia).